We begin with the raw amino-acid sequence, 360 residues long: MRKLKKFFKNPSIFIRDHLNKKYPIVRNEISCSENEEYILMRHDLALESQINIDFPIDVVFTWVNDADPKWQERYQKYKQSVDTEHVGRHALDSARFSNHDELKYSLGCVLKFLPWIRRIYIVTDKQCPNWLTPNDKIRVIDHSEMIEKQYLPTFNSHVIEAHLHKIPDLAEHFIYFNDDVFVARPLPAGHFFRSNGIASLFMSKKSLSTMQAKGTDTPTLSASLKSASLLNHDFSFLIDHPLVHTYVPLRKSMFEECWRLYRADIKRFLPNRFRTNNDLNLATFFIPWLSYIRGVAVPSRDICYYFNARSPAAANYFNALLLAKKNGTLPHSFCANDFNTKNVNPRNNVANLLSNYFSE.

Belongs to the stealth family.

Its function is as follows. Part of a group II capsule biosynthesis locus. The sequence is that of Capsular polysaccharide phosphotransferase LcbA (lcbA) from Aeromonas hydrophila.